Consider the following 244-residue polypeptide: Claudin-12 (244 aa).

Residues 1–10 (MGCRDVHAAT) are Cytoplasmic-facing. The helical transmembrane segment at 11-31 (VLSFLCGIASVAGLFAGTLLP) threads the bilayer. Topologically, residues 32–87 (NWRKLRLITFNRNEKNLTIYTGLWVKCARYDGSSDCLMYDRTWYLSVDQLDLRVLQ) are extracellular. Residues 88–108 (FALPLSIVIAMGALLLCLIGM) form a helical membrane-spanning segment. Residues 109–135 (CNTAFNSSVPNIKLAKCLVNSAGCHLV) lie on the Cytoplasmic side of the membrane. The helical transmembrane segment at 136–156 (AGLLFFLAGTVSLSPSIWAIF) threads the bilayer. The Extracellular portion of the chain corresponds to 157–174 (YNSHLNRKFEPVFTFDYA). A helical transmembrane segment spans residues 175 to 195 (VFVTIASSGGLFMTALLLFVW). The Cytoplasmic portion of the chain corresponds to 196–244 (YCACKSLSSPFWQPLYSHAPGMHTYSQPYSSRSRLSAIEIDIPVVSHST). 2 positions are modified to phosphoserine: Ser-228 and Ser-231.

The protein belongs to the claudin family. As to quaternary structure, interacts with OCLN.

The protein localises to the cell junction. Its subcellular location is the tight junction. It localises to the cell membrane. Its function is as follows. Plays a major role in tight junction-specific obliteration of the intercellular space, through calcium-independent cell-adhesion activity. This chain is Claudin-12 (Cldn12), found in Mus musculus (Mouse).